The sequence spans 368 residues: Putative glutamate--cysteine ligase 2 (368 aa).

The protein belongs to the glutamate--cysteine ligase type 2 family. YbdK subfamily.

It catalyses the reaction L-cysteine + L-glutamate + ATP = gamma-L-glutamyl-L-cysteine + ADP + phosphate + H(+). Functionally, ATP-dependent carboxylate-amine ligase which exhibits weak glutamate--cysteine ligase activity. This Pseudomonas putida (strain ATCC 47054 / DSM 6125 / CFBP 8728 / NCIMB 11950 / KT2440) protein is Putative glutamate--cysteine ligase 2.